The following is a 2774-amino-acid chain: Microtubule-associated protein 1A (2774 aa).

Residues Ser-114, Ser-117, Ser-118, Ser-121, and Ser-155 each carry the phosphoserine modification. Tyr-177 carries the phosphotyrosine modification. The tract at residues 310-329 (PSKIKHRADSKESLKAAPKT) is disordered. Residues Ser-319 and Ser-322 each carry the phosphoserine modification. Repeat 1 spans residues 336–338 (KRE). The 11 X 3 AA repeats of K-K-[DE] stretch occupies residues 336 to 541 (KREEVLEEGA…TQDFEELKRE (206 aa)). Residues 342-390 (EEGAKEARSELAKELAKTEKKAKEPSEKPPEKPSKSERVRGESSEALKA) are compositionally biased toward basic and acidic residues. 9 disordered regions span residues 342–718 (EEGA…SFLS), 737–808 (TIPG…TELT), 845–939 (EDQS…VGKE), 957–1078 (FGAP…QTGC), 1093–1344 (ETGE…ILPE), 1357–1646 (QKDG…SPEQ), 1693–1725 (ESTFLDEGPDEQEITPLQHTPRSPWTSDFKDFQ), 1739–1843 (LAES…VPFS), and 1861–2644 (AELE…LVNG). Ser-384 is modified (phosphoserine). The segment covering 391–406 (EKRRLIKDKAGKKHLK) has biased composition (basic residues). 2 stretches are compositionally biased toward basic and acidic residues: residues 407–464 (EKIS…KPDL) and 484–500 (VKVDKGRAARGEKELSS). A run of 9 repeats spans residues 415–417 (KKD), 420–422 (KKE), 424–426 (KKE), 427–429 (RKE), 431–433 (KKE), 436–438 (RKE), 440–442 (KKD), 444–446 (KKD), and 449–451 (RKD). Thr-504 is subject to Phosphothreonine. The segment covering 506–516 (PAQKGAAPPAA) has biased composition (low complexity). Residues Ser-526 and Ser-527 each carry the phosphoserine modification. Composition is skewed to basic and acidic residues over residues 536–554 (EELKREERGLLAEQRDTGL) and 584–595 (EGEHVEREKEVV). Repeat 11 spans residues 539-541 (KRE). Phosphoserine occurs at positions 604 and 611. 2 stretches are compositionally biased toward basic and acidic residues: residues 614–631 (EVEKEKETWEERKQREAE) and 638–675 (AAREESEAEVKEDVIEKAELEEMEETHPSDEEGEETKA). Position 643 is a phosphoserine (Ser-643). A Phosphothreonine modification is found at Thr-663. Residues Ser-666, Ser-677, Ser-690, and Ser-785 each carry the phosphoserine modification. Polar residues-rich tracts occupy residues 845–858 (EDQSVASLTAPQTE) and 869–881 (TVTSIPSSRTEAT). 4 positions are modified to phosphoserine: Ser-872, Ser-875, Ser-876, and Ser-889. The residue at position 892 (Thr-892) is a Phosphothreonine. 22 positions are modified to phosphoserine: Ser-894, Ser-898, Ser-907, Ser-980, Ser-990, Ser-998, Ser-1007, Ser-1013, Ser-1022, Ser-1029, Ser-1037, Ser-1061, Ser-1132, Ser-1134, Ser-1148, Ser-1160, Ser-1178, Ser-1188, Ser-1191, Ser-1197, Ser-1206, and Ser-1209. The segment covering 1008–1028 (PVEDKSEPRDFQEDSWGETKH) has biased composition (basic and acidic residues). Polar residues predominate over residues 1142-1157 (SVLSVVSPDTTKQEAT). A compositionally biased stretch (polar residues) spans 1180-1190 (EDTQSLSFSEE). A compositionally biased stretch (polar residues) spans 1198–1212 (LDISSKQLSPESLGT). Basic and acidic residues predominate over residues 1220 to 1236 (LGKEERGPVMKAEDDSC). A phosphoserine mark is found at Ser-1252, Ser-1280, Ser-1301, Ser-1304, and Ser-1307. Low complexity predominate over residues 1293–1308 (TSDSSLTKSPESLSSP). Basic and acidic residues-rich tracts occupy residues 1317 to 1336 (WEGKAPGKEKEPELKSETRQ), 1357 to 1409 (QKDG…EDQG), 1416 to 1428 (AEKDKASEQRDTD), 1436 to 1479 (EPRD…EHSI), and 1487 to 1574 (RAPD…KADS). Ser-1504, Ser-1568, Ser-1574, and Ser-1594 each carry phosphoserine. Residues 1599–1613 (SKAREQEKKYWKEQD) are compositionally biased toward basic and acidic residues. Phosphoserine occurs at positions 1622, 1643, 1715, 1742, 1757, 1763, and 1767. Over residues 1707–1718 (TPLQHTPRSPWT) the composition is skewed to polar residues. Phosphothreonine is present on Thr-1772. Ser-1778 and Ser-1784 each carry phosphoserine. The segment covering 1789-1803 (TESTAPMRNEPTTPS) has biased composition (polar residues). Over residues 1818 to 1839 (LPPAPLSPAPAPPTPAPEPHTP) the composition is skewed to pro residues. Residues 1873-1885 (KDYRKAEGEREGE) are compositionally biased toward basic and acidic residues. A Phosphoserine modification is found at Ser-1897. Over residues 1908-1930 (ATRDTEQTEPEQREPTPYPDERS) the composition is skewed to basic and acidic residues. At Thr-1923 the chain carries Phosphothreonine. The span at 1984–1997 (SSPASPQNLQSDTP) shows a compositional bias: polar residues. At Ser-1988 the chain carries Phosphoserine. The segment covering 2008–2034 (AVPPRQEPDPGPNVEPSITPPAVPPRA) has biased composition (pro residues). At Thr-2026 the chain carries Phosphothreonine. A phosphoserine mark is found at Ser-2043 and Ser-2077. Positions 2055–2092 (PDRRTPSPKETGRGHWDDGTNDSDLEKGAREQPEKETR) are enriched in basic and acidic residues. The segment covering 2115–2125 (SSLSSDSHLGS) has biased composition (low complexity). Residues 2144 to 2153 (PAPPQLPSPA) show a composition bias toward pro residues. Phosphoserine occurs at positions 2204, 2221, 2225, 2228, 2229, and 2260. A compositionally biased stretch (polar residues) spans 2226 to 2237 (EGSSSEATTPVI). Residues 2271–2287 (DLTPLSPAPSASLDLAP) are compositionally biased toward low complexity. The segment covering 2288-2298 (APAPAPAPAPG) has biased composition (pro residues). A compositionally biased stretch (low complexity) spans 2299–2309 (LPGDLGDGTLP). The span at 2352–2364 (AEKEEAEAPHAWE) shows a compositional bias: basic and acidic residues. The residue at position 2424 (Ser-2424) is a Phosphoserine. Over residues 2477-2489 (SASDSGSSQSDSD) the composition is skewed to low complexity. Pro residues predominate over residues 2534–2550 (DPPPTPLPDPRPSPPRP). Basic and acidic residues predominate over residues 2565–2575 (GRVERLREKGR). A compositionally biased stretch (low complexity) spans 2613-2623 (RTVPRPRSTPS). Ser-2620 and Ser-2635 each carry phosphoserine.

This sequence belongs to the MAP1 family. In terms of assembly, 3 different light chains, LC1 (a cleavage product of MAP1B), LC2 (a cleavage product of MAP1A) and LC3 (produced by one of the MAP1LC3 genes), can associate with the MAP1A or MAP1B heavy chains. Interacts with guanylate kinase-like domain of DLG1, DLG2 and DLG4. Binds to CSNK1D. Interacts with TIAM2. As to quaternary structure, interacts with ELAVL4. Post-translationally, phosphorylated by CSNK1D. LC2 is generated from MAP1A by proteolytic processing. It is free to associate with both MAP1A and MAP1B. Brain, heart and muscle.

The protein localises to the cytoplasm. It is found in the cytoskeleton. Its function is as follows. Structural protein involved in the filamentous cross-bridging between microtubules and other skeletal elements. The polypeptide is Microtubule-associated protein 1A (Map1a) (Rattus norvegicus (Rat)).